Consider the following 156-residue polypeptide: Small ribosomal subunit protein uS7 (156 aa).

The protein belongs to the universal ribosomal protein uS7 family. Part of the 30S ribosomal subunit. Contacts proteins S9 and S11.

In terms of biological role, one of the primary rRNA binding proteins, it binds directly to 16S rRNA where it nucleates assembly of the head domain of the 30S subunit. Is located at the subunit interface close to the decoding center, probably blocks exit of the E-site tRNA. The sequence is that of Small ribosomal subunit protein uS7 from Natranaerobius thermophilus (strain ATCC BAA-1301 / DSM 18059 / JW/NM-WN-LF).